Reading from the N-terminus, the 319-residue chain is Homoserine dehydrogenase (319 aa).

NADPH-binding residues include Phe-10, Thr-12, Val-13, Arg-40, Lys-57, Ser-92, Ser-93, Ser-114, and Lys-116. Residue Val-13 participates in NAD(+) binding. 2 residues coordinate NADP(+): Val-13 and Arg-40. Ser-92 contacts NAD(+). Ser-92 provides a ligand contact to NADP(+). Residues Ser-114 and Lys-116 each contribute to the NADP(+) site. The Na(+) site is built by Glu-140, Val-143, Ala-145, and Thr-147. NADP(+)-binding residues include Gly-197 and Glu-200. L-homoserine is bound by residues Glu-200 and Asp-211. Lys-215 acts as the Proton donor in catalysis. Gly-296 contacts NADPH. An NAD(+)-binding site is contributed by Gly-296. Gly-296 provides a ligand contact to NADP(+).

It belongs to the homoserine dehydrogenase family. Homodimer. A metal cation is required as a cofactor.

The enzyme catalyses L-homoserine + NAD(+) = L-aspartate 4-semialdehyde + NADH + H(+). It participates in amino-acid biosynthesis; L-methionine biosynthesis via de novo pathway; L-homoserine from L-aspartate: step 3/3. It functions in the pathway amino-acid biosynthesis; L-threonine biosynthesis; L-threonine from L-aspartate: step 3/5. Its function is as follows. Catalyzes the conversion of L-aspartate-beta-semialdehyde (L-Asa) to L-homoserine (L-Hse), the third step in the biosynthesis of threonine and methionine from aspartate. Utilizes NADH but not NADPH as coenzyme. In Pyrococcus horikoshii (strain ATCC 700860 / DSM 12428 / JCM 9974 / NBRC 100139 / OT-3), this protein is Homoserine dehydrogenase.